The sequence spans 147 residues: Large ribosomal subunit protein uL11 (147 aa).

It belongs to the universal ribosomal protein uL11 family. In terms of assembly, part of the ribosomal stalk of the 50S ribosomal subunit. Interacts with L10 and the large rRNA to form the base of the stalk. L10 forms an elongated spine to which L12 dimers bind in a sequential fashion forming a multimeric L10(L12)X complex. Post-translationally, one or more lysine residues are methylated.

In terms of biological role, forms part of the ribosomal stalk which helps the ribosome interact with GTP-bound translation factors. This Thermus thermophilus (strain ATCC BAA-163 / DSM 7039 / HB27) protein is Large ribosomal subunit protein uL11.